Reading from the N-terminus, the 239-residue chain is Pimeloyl-[acyl-carrier protein] methyl ester esterase (239 aa).

Residues Trp20, 77 to 78 (SM), and 138 to 142 (FISLQ) contribute to the substrate site. Ser77 serves as the catalytic Nucleophile. Residues Asp192 and His220 contribute to the active site. A substrate-binding site is contributed by His220.

Belongs to the AB hydrolase superfamily. Carboxylesterase BioH family. As to quaternary structure, monomer.

The protein localises to the cytoplasm. The enzyme catalyses 6-carboxyhexanoyl-[ACP] methyl ester + H2O = 6-carboxyhexanoyl-[ACP] + methanol + H(+). Its pathway is cofactor biosynthesis; biotin biosynthesis. The physiological role of BioH is to remove the methyl group introduced by BioC when the pimeloyl moiety is complete. It allows to synthesize pimeloyl-ACP via the fatty acid synthetic pathway through the hydrolysis of the ester bonds of pimeloyl-ACP esters. The protein is Pimeloyl-[acyl-carrier protein] methyl ester esterase of Legionella pneumophila (strain Paris).